A 286-amino-acid polypeptide reads, in one-letter code: UPF0173 metal-dependent hydrolase RALTA_A1748 (286 aa).

It belongs to the UPF0173 family.

In Cupriavidus taiwanensis (strain DSM 17343 / BCRC 17206 / CCUG 44338 / CIP 107171 / LMG 19424 / R1) (Ralstonia taiwanensis (strain LMG 19424)), this protein is UPF0173 metal-dependent hydrolase RALTA_A1748.